The sequence spans 223 residues: Germin-like protein subfamily 1 member 10 (223 aa).

Residues 1-24 (MAMKSLSFLAALSLLALTLPLTIA) form the signal peptide. Cysteines 34 and 51 form a disulfide. Asn38 carries N-linked (GlcNAc...) asparagine glycosylation. The Cupin type-1 domain occupies 65 to 215 (PGLQTARPIT…AFQVDPRVVM (151 aa)). Residues His113, His115, Glu120, and His161 each coordinate Mn(2+).

The protein belongs to the germin family. Oligomer (believed to be a pentamer but probably hexamer).

It is found in the secreted. The protein localises to the extracellular space. It localises to the apoplast. Its function is as follows. May play a role in plant defense. Probably has no oxalate oxidase activity even if the active site is conserved. This chain is Germin-like protein subfamily 1 member 10, found in Arabidopsis thaliana (Mouse-ear cress).